The sequence spans 275 residues: Adenylate kinase (275 aa).

Position 54-59 (54-59) interacts with ATP; sequence GAGKGT. The NMP stretch occupies residues 74–103; it reads ATGDMLRSQVAKKTPLGREAKKIMDQGGLV. AMP contacts are provided by residues T75, R80, 101–103, 130–133, and Q137; these read GLV and GFPR. The LID stretch occupies residues 171-208; the sequence is GRLVHPASGRSYHRVFNPPKADMKDDITGEPLVSRSDD. ATP-binding positions include R172 and 181–182; that span reads SY. Residues R205 and R216 each contribute to the AMP site. Residue Q244 participates in ATP binding.

Belongs to the adenylate kinase family. AK2 subfamily. In terms of assembly, monomer.

It localises to the cytoplasm. The protein resides in the cytosol. The protein localises to the mitochondrion intermembrane space. The catalysed reaction is AMP + ATP = 2 ADP. Functionally, catalyzes the reversible transfer of the terminal phosphate group between ATP and AMP. Plays an important role in cellular energy homeostasis and in adenine nucleotide metabolism. Adenylate kinase activity is critical for regulation of the phosphate utilization and the AMP de novo biosynthesis pathways. This is Adenylate kinase (adk1) from Botryotinia fuckeliana (strain B05.10) (Noble rot fungus).